The sequence spans 216 residues: MDSAWTALDMETQTMLKTAIKDPKTVDLEKLSNAVVEHSLKDLSFCKDAGRMCYAVVQAEAQKTASSVFRRNLLNRLQQEFIAREETRKRSMQEWVCVVTFICSIFDYIKVNNSPIAALVDPVYDCLFGLAQPDSLMNEEEVDCLVVQLHRVGEQLEQTNSERMNQLFYLLRDGFLLQEDLSSMTRLLLLEILEFRASGWTLSETAHKYYYSEVAD.

The region spanning 2 to 199 is the MIF4G domain; that stretch reads DSAWTALDME…LEILEFRASG (198 aa).

The protein belongs to the MIF4GD family. In terms of assembly, interacts with eif4g1, eif4g2 and slbp; probably tethered by SLBP to the 3'-end of mRNAs ending with the histone stem-loop, it also interacts with eif4g1 which is bound to their 5'-end.

It localises to the cytoplasm. It is found in the nucleus. Functions in replication-dependent translation of histone mRNAs which differ from other eukaryotic mRNAs in that they do not end with a poly-A tail but a stem-loop. May participate in circularizing those mRNAs specifically enhancing their translation. This is MIF4G domain-containing protein A (mif4gda) from Danio rerio (Zebrafish).